The primary structure comprises 515 residues: Maturase K (515 aa).

Belongs to the intron maturase 2 family. MatK subfamily.

It is found in the plastid. The protein resides in the chloroplast. Its function is as follows. Usually encoded in the trnK tRNA gene intron. Probably assists in splicing its own and other chloroplast group II introns. In Pinus pinea (Italian stone pine), this protein is Maturase K.